Here is a 602-residue protein sequence, read N- to C-terminus: Glutamyl-tRNA(Gln) amidotransferase subunit B, mitochondrial (602 aa).

The N-terminal 56 residues, 1 to 56 (MFRSCLRHCRRATVRSRTCPRCSHHEIPQLQVVQRQISLSSSFPHIRRLQTSSTDT), are a transit peptide targeting the mitochondrion.

This sequence belongs to the GatB/GatE family. GatB subfamily. Subunit of the heterotrimeric GatCAB amidotransferase (AdT) complex, composed of A, B and C subunits.

It localises to the mitochondrion. The enzyme catalyses L-glutamyl-tRNA(Gln) + L-glutamine + ATP + H2O = L-glutaminyl-tRNA(Gln) + L-glutamate + ADP + phosphate + H(+). Functionally, allows the formation of correctly charged Gln-tRNA(Gln) through the transamidation of misacylated Glu-tRNA(Gln) in the mitochondria. The reaction takes place in the presence of glutamine and ATP through an activated gamma-phospho-Glu-tRNA(Gln). This chain is Glutamyl-tRNA(Gln) amidotransferase subunit B, mitochondrial (nempA), found in Emericella nidulans (strain FGSC A4 / ATCC 38163 / CBS 112.46 / NRRL 194 / M139) (Aspergillus nidulans).